The chain runs to 393 residues: Branched-chain amino acid aminotransferase 1, mitochondrial (393 aa).

Residues 1 to 34 (MIHRGLWLHNLVQSYRVGSSSSSSTLFKLVYRYN) constitute a mitochondrion transit peptide. Arg-138 lines the pyridoxal 5'-phosphate pocket. Residue Lys-240 is the Proton acceptor of the active site. At Lys-240 the chain carries N6-(pyridoxal phosphate)lysine. Position 276 (Glu-276) interacts with pyridoxal 5'-phosphate.

Belongs to the class-IV pyridoxal-phosphate-dependent aminotransferase family. Pyridoxal 5'-phosphate serves as cofactor. In terms of tissue distribution, expressed specifically in lupulin glands.

The protein localises to the mitochondrion. It catalyses the reaction L-isoleucine + 2-oxoglutarate = (S)-3-methyl-2-oxopentanoate + L-glutamate. The catalysed reaction is L-leucine + 2-oxoglutarate = 4-methyl-2-oxopentanoate + L-glutamate. The enzyme catalyses L-valine + 2-oxoglutarate = 3-methyl-2-oxobutanoate + L-glutamate. It functions in the pathway amino-acid biosynthesis; L-isoleucine biosynthesis; L-isoleucine from 2-oxobutanoate: step 4/4. It participates in amino-acid biosynthesis; L-leucine biosynthesis; L-leucine from 3-methyl-2-oxobutanoate: step 4/4. Its pathway is amino-acid biosynthesis; L-valine biosynthesis; L-valine from pyruvate: step 4/4. Functionally, converts 2-oxo acids to branched-chain amino acids (BCAA). Shows no kinetic preferences corresponding to anabolic or catabolic functions, but likely involved in BCAA catabolism. The protein is Branched-chain amino acid aminotransferase 1, mitochondrial of Humulus lupulus (European hop).